The chain runs to 119 residues: Large ribosomal subunit protein uL22 (119 aa).

Belongs to the universal ribosomal protein uL22 family. As to quaternary structure, part of the 50S ribosomal subunit.

Functionally, this protein binds specifically to 23S rRNA; its binding is stimulated by other ribosomal proteins, e.g. L4, L17, and L20. It is important during the early stages of 50S assembly. It makes multiple contacts with different domains of the 23S rRNA in the assembled 50S subunit and ribosome. The globular domain of the protein is located near the polypeptide exit tunnel on the outside of the subunit, while an extended beta-hairpin is found that lines the wall of the exit tunnel in the center of the 70S ribosome. This is Large ribosomal subunit protein uL22 from Trichormus variabilis (strain ATCC 29413 / PCC 7937) (Anabaena variabilis).